The following is a 525-amino-acid chain: GMP synthase [glutamine-hydrolyzing] (525 aa).

In terms of domain architecture, Glutamine amidotransferase type-1 spans 9–207 (RILILDFGSQ…ILDICECEAL (199 aa)). Cysteine 86 serves as the catalytic Nucleophile. Catalysis depends on residues histidine 181 and glutamate 183. A GMPS ATP-PPase domain is found at 208–400 (WTPSKIAEDA…LGLPYDMVYR (193 aa)). 235–241 (SGGVDSS) contributes to the ATP binding site.

As to quaternary structure, homodimer.

The catalysed reaction is XMP + L-glutamine + ATP + H2O = GMP + L-glutamate + AMP + diphosphate + 2 H(+). The protein operates within purine metabolism; GMP biosynthesis; GMP from XMP (L-Gln route): step 1/1. Functionally, catalyzes the synthesis of GMP from XMP. This is GMP synthase [glutamine-hydrolyzing] from Pseudomonas fluorescens (strain SBW25).